The following is a 220-amino-acid chain: Sericin-2 (220 aa).

Composition is skewed to low complexity over residues 1–131 and 141–155; these read SSST…ASSS and NESS…QNSA. Residues 1–220 are disordered; sequence SSSTNNSSGS…SSSSSSWSSA (220 aa). Residues 156-165 are compositionally biased toward polar residues; sequence TRSQVINADG. Low complexity predominate over residues 166–220; the sequence is SQSSSSSSSSASNQASATSSSSVSADGSESESSSSSSSSSSSSSESSSSSSWSSA.

As to expression, produced exclusively in the middle (MSG) section of silk glands.

It is found in the secreted. In terms of biological role, provides the silk fibroin thread with a sticky coating. Acts as a cement by sticking silk threads together. This is Sericin-2 (SER2) from Galleria mellonella (Greater wax moth).